Reading from the N-terminus, the 511-residue chain is GMP synthase [glutamine-hydrolyzing] (511 aa).

One can recognise a Glutamine amidotransferase type-1 domain in the interval 5–195 (IVIVLDFGGQ…LFNICGCKGD (191 aa)). The active-site Nucleophile is cysteine 82. Residues histidine 169 and glutamate 171 contribute to the active site. The region spanning 196-386 (WKTSSFIEER…LGIPEKIVKR (191 aa)) is the GMPS ATP-PPase domain. 223–229 (SGGVDSS) is an ATP binding site.

As to quaternary structure, homodimer.

It catalyses the reaction XMP + L-glutamine + ATP + H2O = GMP + L-glutamate + AMP + diphosphate + 2 H(+). It participates in purine metabolism; GMP biosynthesis; GMP from XMP (L-Gln route): step 1/1. In terms of biological role, catalyzes the synthesis of GMP from XMP. The chain is GMP synthase [glutamine-hydrolyzing] from Caldicellulosiruptor saccharolyticus (strain ATCC 43494 / DSM 8903 / Tp8T 6331).